The following is a 386-amino-acid chain: Queuine tRNA-ribosyltransferase (386 aa).

The active-site Proton acceptor is Asp-102. Substrate contacts are provided by residues 102–106 (DSGGY), Asp-156, Gln-203, and Gly-230. The tract at residues 261-267 (GVGKPDD) is RNA binding. The active-site Nucleophile is the Asp-280. Residues 285–289 (TRSGR) form an RNA binding; important for wobble base 34 recognition region. Residues Cys-318, Cys-320, Cys-323, and His-349 each coordinate Zn(2+).

This sequence belongs to the queuine tRNA-ribosyltransferase family. As to quaternary structure, homodimer. Within each dimer, one monomer is responsible for RNA recognition and catalysis, while the other monomer binds to the replacement base PreQ1. Zn(2+) serves as cofactor.

It catalyses the reaction 7-aminomethyl-7-carbaguanine + guanosine(34) in tRNA = 7-aminomethyl-7-carbaguanosine(34) in tRNA + guanine. It participates in tRNA modification; tRNA-queuosine biosynthesis. Its function is as follows. Catalyzes the base-exchange of a guanine (G) residue with the queuine precursor 7-aminomethyl-7-deazaguanine (PreQ1) at position 34 (anticodon wobble position) in tRNAs with GU(N) anticodons (tRNA-Asp, -Asn, -His and -Tyr). Catalysis occurs through a double-displacement mechanism. The nucleophile active site attacks the C1' of nucleotide 34 to detach the guanine base from the RNA, forming a covalent enzyme-RNA intermediate. The proton acceptor active site deprotonates the incoming PreQ1, allowing a nucleophilic attack on the C1' of the ribose to form the product. After dissociation, two additional enzymatic reactions on the tRNA convert PreQ1 to queuine (Q), resulting in the hypermodified nucleoside queuosine (7-(((4,5-cis-dihydroxy-2-cyclopenten-1-yl)amino)methyl)-7-deazaguanosine). This Zymomonas mobilis subsp. mobilis (strain ATCC 31821 / ZM4 / CP4) protein is Queuine tRNA-ribosyltransferase.